The following is a 307-amino-acid chain: Myeloid-associated differentiation marker-like protein 2 (307 aa).

2 consecutive MARVEL domains span residues 17-154 (AVTS…ARPG) and 159-303 (YMAT…RIRF). A run of 7 helical transmembrane segments spans residues 53 to 73 (FCVA…ACEF), 90 to 110 (AFAM…PLYF), 129 to 149 (LAAS…VALT), 163 to 183 (VSGL…GALV), 198 to 218 (VAVY…SVLG), 232 to 252 (VVYT…WPVF), and 278 to 298 (LVVA…LAYS).

The protein belongs to the MAL family.

It is found in the membrane. The polypeptide is Myeloid-associated differentiation marker-like protein 2 (MYADML2) (Bos taurus (Bovine)).